The sequence spans 143 residues: Nucleoside diphosphate kinase (143 aa).

Positions 11, 59, 87, 93, 104, and 114 each coordinate ATP. His117 functions as the Pros-phosphohistidine intermediate in the catalytic mechanism.

The protein belongs to the NDK family. In terms of assembly, homotetramer. Mg(2+) serves as cofactor.

It localises to the cytoplasm. It carries out the reaction a 2'-deoxyribonucleoside 5'-diphosphate + ATP = a 2'-deoxyribonucleoside 5'-triphosphate + ADP. The catalysed reaction is a ribonucleoside 5'-diphosphate + ATP = a ribonucleoside 5'-triphosphate + ADP. Functionally, major role in the synthesis of nucleoside triphosphates other than ATP. The ATP gamma phosphate is transferred to the NDP beta phosphate via a ping-pong mechanism, using a phosphorylated active-site intermediate. In Clostridium perfringens (strain ATCC 13124 / DSM 756 / JCM 1290 / NCIMB 6125 / NCTC 8237 / Type A), this protein is Nucleoside diphosphate kinase.